Reading from the N-terminus, the 623-residue chain is Membrane protein insertase YidC (623 aa).

Residues 8–28 (LILATGLSFLVIMVWFFLFPP) form a helical membrane-spanning segment. Residues 33–64 (TEGEPTVATQQTAVAPSATPDAPTTAVPPDAD) form a disordered region. A compositionally biased stretch (low complexity) spans 44-62 (TAVAPSATPDAPTTAVPPD). Transmembrane regions (helical) follow at residues 379–399 (MGLAIIALTFLLKALVLPLAY), 449–469 (LPILIQIPIFFSLYKVIFVTI), 507–527 (TTMALIFIGALPILLGVSMWL), and 543–563 (IFAWMPWVFMFMLGHFASGLV). Residues 601-617 (KPAAQPAGKAANDGAAP) are compositionally biased toward low complexity. Residues 601–623 (KPAAQPAGKAANDGAAPAKKRKP) form a disordered region.

Belongs to the OXA1/ALB3/YidC family. Type 1 subfamily. As to quaternary structure, interacts with the Sec translocase complex via SecD. Specifically interacts with transmembrane segments of nascent integral membrane proteins during membrane integration.

The protein resides in the cell inner membrane. Its function is as follows. Required for the insertion and/or proper folding and/or complex formation of integral membrane proteins into the membrane. Involved in integration of membrane proteins that insert both dependently and independently of the Sec translocase complex, as well as at least some lipoproteins. Aids folding of multispanning membrane proteins. The polypeptide is Membrane protein insertase YidC (Cereibacter sphaeroides (strain KD131 / KCTC 12085) (Rhodobacter sphaeroides)).